The primary structure comprises 284 residues: tRNA pseudouridine synthase A (284 aa).

The Nucleophile role is filled by D52. Residue Y149 participates in substrate binding.

The protein belongs to the tRNA pseudouridine synthase TruA family. As to quaternary structure, homodimer.

The catalysed reaction is uridine(38/39/40) in tRNA = pseudouridine(38/39/40) in tRNA. In terms of biological role, formation of pseudouridine at positions 38, 39 and 40 in the anticodon stem and loop of transfer RNAs. This is tRNA pseudouridine synthase A from Orientia tsutsugamushi (strain Boryong) (Rickettsia tsutsugamushi).